The chain runs to 257 residues: Hydroxyacylglutathione hydrolase (257 aa).

H54, H56, D58, H59, H113, D137, and H175 together coordinate Zn(2+).

Belongs to the metallo-beta-lactamase superfamily. Glyoxalase II family. In terms of assembly, monomer. Zn(2+) serves as cofactor.

It catalyses the reaction an S-(2-hydroxyacyl)glutathione + H2O = a 2-hydroxy carboxylate + glutathione + H(+). Its pathway is secondary metabolite metabolism; methylglyoxal degradation; (R)-lactate from methylglyoxal: step 2/2. Thiolesterase that catalyzes the hydrolysis of S-D-lactoyl-glutathione to form glutathione and D-lactic acid. The sequence is that of Hydroxyacylglutathione hydrolase from Nostoc sp. (strain PCC 7120 / SAG 25.82 / UTEX 2576).